The chain runs to 430 residues: Glutamate-1-semialdehyde 2,1-aminomutase (430 aa).

Lys-265 carries the post-translational modification N6-(pyridoxal phosphate)lysine.

Belongs to the class-III pyridoxal-phosphate-dependent aminotransferase family. HemL subfamily. In terms of assembly, homodimer. Requires pyridoxal 5'-phosphate as cofactor.

Its subcellular location is the cytoplasm. It catalyses the reaction (S)-4-amino-5-oxopentanoate = 5-aminolevulinate. It participates in porphyrin-containing compound metabolism; protoporphyrin-IX biosynthesis; 5-aminolevulinate from L-glutamyl-tRNA(Glu): step 2/2. The protein is Glutamate-1-semialdehyde 2,1-aminomutase of Helicobacter pylori (strain HPAG1).